We begin with the raw amino-acid sequence, 121 residues long: Large ribosomal subunit protein bL12 (121 aa).

The protein belongs to the bacterial ribosomal protein bL12 family. As to quaternary structure, homodimer. Part of the ribosomal stalk of the 50S ribosomal subunit. Forms a multimeric L10(L12)X complex, where L10 forms an elongated spine to which 2 to 4 L12 dimers bind in a sequential fashion. Binds GTP-bound translation factors.

Functionally, forms part of the ribosomal stalk which helps the ribosome interact with GTP-bound translation factors. Is thus essential for accurate translation. The protein is Large ribosomal subunit protein bL12 of Clostridium beijerinckii (strain ATCC 51743 / NCIMB 8052) (Clostridium acetobutylicum).